The primary structure comprises 453 residues: ATP-dependent protease ATPase subunit HslU (453 aa).

ATP is bound by residues I18, 60–65, D266, E331, and R403; that span reads GVGKTE.

The protein belongs to the ClpX chaperone family. HslU subfamily. In terms of assembly, a double ring-shaped homohexamer of HslV is capped on each side by a ring-shaped HslU homohexamer. The assembly of the HslU/HslV complex is dependent on binding of ATP.

It localises to the cytoplasm. In terms of biological role, ATPase subunit of a proteasome-like degradation complex; this subunit has chaperone activity. The binding of ATP and its subsequent hydrolysis by HslU are essential for unfolding of protein substrates subsequently hydrolyzed by HslV. HslU recognizes the N-terminal part of its protein substrates and unfolds these before they are guided to HslV for hydrolysis. The protein is ATP-dependent protease ATPase subunit HslU of Desulforapulum autotrophicum (strain ATCC 43914 / DSM 3382 / VKM B-1955 / HRM2) (Desulfobacterium autotrophicum).